We begin with the raw amino-acid sequence, 384 residues long: tRNA-specific 2-thiouridylase MnmA (384 aa).

Residues 21 to 28 and methionine 47 each bind ATP; that span reads GMSGGVDS. Residues 107 to 109 are interaction with target base in tRNA; it reads NPD. Cysteine 112 functions as the Nucleophile in the catalytic mechanism. The cysteines at positions 112 and 208 are disulfide-linked. An ATP-binding site is contributed by glycine 136. The segment at 158-160 is interaction with tRNA; that stretch reads KDQ. Cysteine 208 acts as the Cysteine persulfide intermediate in catalysis. Residues 320–321 are interaction with tRNA; the sequence is RY.

The protein belongs to the MnmA/TRMU family.

Its subcellular location is the cytoplasm. The enzyme catalyses S-sulfanyl-L-cysteinyl-[protein] + uridine(34) in tRNA + AH2 + ATP = 2-thiouridine(34) in tRNA + L-cysteinyl-[protein] + A + AMP + diphosphate + H(+). Its function is as follows. Catalyzes the 2-thiolation of uridine at the wobble position (U34) of tRNA, leading to the formation of s(2)U34. The polypeptide is tRNA-specific 2-thiouridylase MnmA (Chromohalobacter salexigens (strain ATCC BAA-138 / DSM 3043 / CIP 106854 / NCIMB 13768 / 1H11)).